Reading from the N-terminus, the 97-residue chain is Putative pterin-4-alpha-carbinolamine dehydratase (97 aa).

Belongs to the pterin-4-alpha-carbinolamine dehydratase family.

It carries out the reaction (4aS,6R)-4a-hydroxy-L-erythro-5,6,7,8-tetrahydrobiopterin = (6R)-L-erythro-6,7-dihydrobiopterin + H2O. The protein is Putative pterin-4-alpha-carbinolamine dehydratase of Rhizorhabdus wittichii (strain DSM 6014 / CCUG 31198 / JCM 15750 / NBRC 105917 / EY 4224 / RW1) (Sphingomonas wittichii).